We begin with the raw amino-acid sequence, 248 residues long: 4-hydroxy-tetrahydrodipicolinate reductase (248 aa).

NAD(+) is bound by residues 8-13 (GAKGRM), 75-77 (GTT), and 99-102 (ATNM). The active-site Proton donor/acceptor is His-131. His-132 is a binding site for (S)-2,3,4,5-tetrahydrodipicolinate. The Proton donor role is filled by Lys-135. Residue 141–142 (GT) coordinates (S)-2,3,4,5-tetrahydrodipicolinate.

The protein belongs to the DapB family.

The protein resides in the cytoplasm. It catalyses the reaction (S)-2,3,4,5-tetrahydrodipicolinate + NAD(+) + H2O = (2S,4S)-4-hydroxy-2,3,4,5-tetrahydrodipicolinate + NADH + H(+). The enzyme catalyses (S)-2,3,4,5-tetrahydrodipicolinate + NADP(+) + H2O = (2S,4S)-4-hydroxy-2,3,4,5-tetrahydrodipicolinate + NADPH + H(+). It functions in the pathway amino-acid biosynthesis; L-lysine biosynthesis via DAP pathway; (S)-tetrahydrodipicolinate from L-aspartate: step 4/4. Catalyzes the conversion of 4-hydroxy-tetrahydrodipicolinate (HTPA) to tetrahydrodipicolinate. This is 4-hydroxy-tetrahydrodipicolinate reductase from Campylobacter jejuni subsp. doylei (strain ATCC BAA-1458 / RM4099 / 269.97).